Consider the following 105-residue polypeptide: N(4)-acetylcytidine amidohydrolase (105 aa).

Positions 7–93 (TFFERFEHDI…VIAEIYPGLE (87 aa)) constitute an ASCH domain. Catalysis depends on Lys21, which acts as the Proton acceptor. Catalysis depends on Thr24, which acts as the Nucleophile. Residue Glu74 is the Proton donor of the active site.

The protein belongs to the N(4)-acetylcytidine amidohydrolase family.

It carries out the reaction N(4)-acetylcytidine + H2O = cytidine + acetate + H(+). It catalyses the reaction N(4)-acetyl-2'-deoxycytidine + H2O = 2'-deoxycytidine + acetate + H(+). The catalysed reaction is N(4)-acetylcytosine + H2O = cytosine + acetate + H(+). In terms of biological role, catalyzes the hydrolysis of N(4)-acetylcytidine (ac4C). The protein is N(4)-acetylcytidine amidohydrolase of Shewanella baltica (strain OS195).